A 262-amino-acid polypeptide reads, in one-letter code: Acyl-[acyl-carrier-protein]--UDP-N-acetylglucosamine O-acyltransferase (262 aa).

The protein belongs to the transferase hexapeptide repeat family. LpxA subfamily. Homotrimer.

The protein localises to the cytoplasm. The enzyme catalyses a (3R)-hydroxyacyl-[ACP] + UDP-N-acetyl-alpha-D-glucosamine = a UDP-3-O-[(3R)-3-hydroxyacyl]-N-acetyl-alpha-D-glucosamine + holo-[ACP]. It functions in the pathway glycolipid biosynthesis; lipid IV(A) biosynthesis; lipid IV(A) from (3R)-3-hydroxytetradecanoyl-[acyl-carrier-protein] and UDP-N-acetyl-alpha-D-glucosamine: step 1/6. Involved in the biosynthesis of lipid A, a phosphorylated glycolipid that anchors the lipopolysaccharide to the outer membrane of the cell. The protein is Acyl-[acyl-carrier-protein]--UDP-N-acetylglucosamine O-acyltransferase of Burkholderia orbicola (strain MC0-3).